The chain runs to 142 residues: Hemoglobin subunit alpha-2 (142 aa).

Positions leucine 2–arginine 142 constitute a Globin domain. Histidine 59 is an O2 binding site. A heme b-binding site is contributed by histidine 88.

Belongs to the globin family. As to quaternary structure, heterotetramer of two alpha chains and two beta chains. In terms of tissue distribution, red blood cells.

Involved in oxygen transport from the lung to the various peripheral tissues. The polypeptide is Hemoglobin subunit alpha-2 (hba2) (Xenopus laevis (African clawed frog)).